A 174-amino-acid polypeptide reads, in one-letter code: CASP-like protein 1 (174 aa).

The interval 1 to 25 (MDSKSGRSESAINIPESNSTKHKST) is disordered. Residues 1–46 (MDSKSGRSESAINIPESNSTKHKSTAVHTATKVAAVAPRGGGWRRG) are Cytoplasmic-facing. The span at 8–18 (SESAINIPESN) shows a compositional bias: polar residues. A helical transmembrane segment spans residues 47-67 (VSIFDFILRICALAAALAATA). The Extracellular portion of the chain corresponds to 68-96 (TMGTTDQTLPFFTQIIQFQASYDDLPVFT). A helical transmembrane segment spans residues 97–117 (FFVVANGIASGYLVLSLPFSI). Over 118 to 119 (AT) the chain is Cytoplasmic. The helical transmembrane segment at 120–139 (IVRPHAAAIKLLLIIFDTQF) threads the bilayer. The Extracellular portion of the chain corresponds to 140-150 (NDFCQRVSGAV). The chain crosses the membrane as a helical span at residues 151–171 (VASFVAAVILIFLVVLSAVAI). At 172–174 (RKH) the chain is on the cytoplasmic side.

It belongs to the Casparian strip membrane proteins (CASP) family. Homodimer and heterodimers.

It localises to the cell membrane. In Triphysaria pusilla (Dwarf owl's-clover), this protein is CASP-like protein 1.